Here is a 187-residue protein sequence, read N- to C-terminus: UPF0301 protein ECA3925 (187 aa).

It belongs to the UPF0301 (AlgH) family.

This Pectobacterium atrosepticum (strain SCRI 1043 / ATCC BAA-672) (Erwinia carotovora subsp. atroseptica) protein is UPF0301 protein ECA3925.